A 304-amino-acid chain; its full sequence is tRNA pseudouridine synthase A (304 aa).

Residue aspartate 65 is the Nucleophile of the active site. Tyrosine 123 provides a ligand contact to substrate. Residues 274–304 (HTGQEKPEARLGNGDLESREERPPHEMSPLH) are disordered. The segment covering 289–298 (LESREERPPH) has biased composition (basic and acidic residues).

This sequence belongs to the tRNA pseudouridine synthase TruA family. In terms of assembly, homodimer.

It catalyses the reaction uridine(38/39/40) in tRNA = pseudouridine(38/39/40) in tRNA. In terms of biological role, formation of pseudouridine at positions 38, 39 and 40 in the anticodon stem and loop of transfer RNAs. This chain is tRNA pseudouridine synthase A, found in Gloeobacter violaceus (strain ATCC 29082 / PCC 7421).